The following is a 1121-amino-acid chain: PR domain zinc finger protein 10 (1121 aa).

Disordered stretches follow at residues 1 to 24 (MEAKQESSTVWSTASNNDTGNTPQ) and 92 to 125 (TEASSSPLGATDSTVDSEDEEEDNDSEDSEMDDW). Positions 106–124 (VDSEDEEEDNDSEDSEMDD) are enriched in acidic residues. Positions 173-290 (LPLVLYIDRF…PKQELKVWYA (118 aa)) constitute an SET domain. An N-terminal PR domain; essential for transcriptional activation region spans residues 192 to 295 (IPKRTQFGPL…KVWYAASYAE (104 aa)). The C2H2-type 1 zinc-finger motif lies at 319-341 (WPCYECNRRFMSSEQLQQHLNMH). Disordered regions lie at residues 350–387 (RPKSRGRGRGRKRFGGARRPGRRTKFLCPQTPVESADK) and 419–473 (ESME…PHLT). Positions 351–374 (PKSRGRGRGRKRFGGARRPGRRTK) are enriched in basic residues. 9 C2H2-type zinc fingers span residues 500–522 (FKCPQCGKAFRDKEKLEQHMRFH), 529–551 (HVCHQCGKGFLSSTSLEDHLVLH), 557–579 (YSCLFCAESYDRLELLKVHVGIH), 585–608 (FLCPSCKKSFTDFIQVKKHVRSFH), 613–635 (FQCSECDKAFCRPDKLRLHMLRH), 641–664 (FLCSTCGKQFKRKDKLREHMQRMH), 696–719 (FKCRLCMMGFRRRGMLVNHLSKRH), 741–764 (YYCQYCDKVYKSASKRKAHILKNH), and 803–826 (VCCPHCAKQYSSKTKMVQHIRKKH). Residues 871 to 1101 (QAMTELSQTL…PAGGQQATTQ (231 aa)) are C-terminal glutamine-rich region; essential for transcriptional activation. The tract at residues 1077–1097 (VPSTATQGHPDPLEQPAGGQQ) is disordered.

It belongs to the class V-like SAM-binding methyltransferase superfamily.

It is found in the nucleus. Its function is as follows. Transcriptional activator, essential for early embryonic development and survival of embryonic stem cells (ESCs). Supports cell growth and survival during early development by transcriptionally activating the expression of the translation initiation factor EIF3B, to sustain global translation. Activates the transcription of FLNC. The polypeptide is PR domain zinc finger protein 10 (prdm10) (Danio rerio (Zebrafish)).